A 622-amino-acid chain; its full sequence is MSLDISQFPVLAQANTPNELRQLPQALLPQLADELREFLLKSVGMSSGHFASGLGTVELTVALHYVYNTPFDRLIWDVGHQAYPHKILTGRRDRMHTIRQKNGLHPFPWREESEYDTFSVGHSGTSISAALAMAVAAEKEQAGRKVVAVIGDGAMTGGMVFEAMNHAGDLHNDMLMVLNDNEMSISENVGALNNHLAQLMSGRLYTTIRESSKKVLKGMPVIKEMAKRTEEHLKGMVVPGTLFEELGFNYIGPIDGHDVDALVETLRNMRSLKGPQVLHIMTKKGRGYEPAEKDPIGWHAVPKFDPSQFKKPATKPGLPTFSQVFGKWLCDIAEQDEKVLGITPAMREGSGMVEFSQRFPKQYFDAAIAEQHAVTLGAGFACEGFKPVVAIYSTFLQRGYDQLIHDVALQRLPVLFAIDRGGIVGADGPTHQGAFDLSFMRCIPNMVIMAPSDENECRQMLYTGYCYDAGPSAVRYPRGSATGATQVEAMTALPIGKGVIKRLGKRIAMLNFGTTLAAALTAAESLDATVVDMRFVKPLDVDLVKEMAQTHDVLVTVEENAIMGGAGSGVLELLQKLKMPKPVLQIGLPDEFIKHGSPEEVTHDLQLDAEGMLAQINAFLAD.

Thiamine diphosphate is bound by residues histidine 80 and 121 to 123 (GHS). Aspartate 152 lines the Mg(2+) pocket. Thiamine diphosphate is bound by residues 153 to 154 (GA), asparagine 181, tyrosine 288, and glutamate 370. Position 181 (asparagine 181) interacts with Mg(2+).

Belongs to the transketolase family. DXPS subfamily. As to quaternary structure, homodimer. Requires Mg(2+) as cofactor. It depends on thiamine diphosphate as a cofactor.

The catalysed reaction is D-glyceraldehyde 3-phosphate + pyruvate + H(+) = 1-deoxy-D-xylulose 5-phosphate + CO2. Its pathway is metabolic intermediate biosynthesis; 1-deoxy-D-xylulose 5-phosphate biosynthesis; 1-deoxy-D-xylulose 5-phosphate from D-glyceraldehyde 3-phosphate and pyruvate: step 1/1. Functionally, catalyzes the acyloin condensation reaction between C atoms 2 and 3 of pyruvate and glyceraldehyde 3-phosphate to yield 1-deoxy-D-xylulose-5-phosphate (DXP). This is 1-deoxy-D-xylulose-5-phosphate synthase from Shewanella sp. (strain MR-4).